The following is a 1083-amino-acid chain: Ubiquitin-protein ligase E3C (1083 aa).

Composition is skewed to basic and acidic residues over residues 1-10 (MFSFEGDFKT) and 20-40 (SRKE…RKRE). Positions 1–40 (MFSFEGDFKTRPKVSLGGASRKEEKASLLHRTQEERRKRE) are disordered. Positions 1–60 (MFSFEGDFKTRPKVSLGGASRKEEKASLLHRTQEERRKREEERRRLKNAIIIQSFIRGYR) are cis-determinant of acceptor ubiquitin-binding. Positions 45–74 (RLKNAIIIQSFIRGYRDRKQQYSIQRSAFD) constitute an IQ domain. The disordered stretch occupies residues 355–385 (SPASASCHDSASDSEEESEEADKPSSPEDGR). The span at 375 to 385 (ADKPSSPEDGR) shows a compositional bias: basic and acidic residues. Residues 744–1083 (NEPDLKKRIR…IECAAGFELS (340 aa)) enclose the HECT domain. A Glycyl lysine isopeptide (Lys-Gly) (interchain with G-Cter in ubiquitin); by autocatalysis cross-link involves residue lysine 903. The Glycyl thioester intermediate role is filled by cysteine 1051.

The protein belongs to the UBE3C family. In terms of assembly, interacts with 26S proteasomes. Interacts (via the HECT domain) with UBE2D1 and, less efficiently, with UBE2L3. In terms of processing, autoubiquitinated; promoting its own degradation. Highly expressed in skeletal muscle. Detected at much lower levels in kidney and pancreas.

The catalysed reaction is S-ubiquitinyl-[E2 ubiquitin-conjugating enzyme]-L-cysteine + [acceptor protein]-L-lysine = [E2 ubiquitin-conjugating enzyme]-L-cysteine + N(6)-ubiquitinyl-[acceptor protein]-L-lysine.. Its pathway is protein modification; protein ubiquitination. Its function is as follows. E3 ubiquitin-protein ligase that specifically catalyzes 'Lys-29'- and 'Lys-48'-linked polyubiquitin chains. Accepts ubiquitin from the E2 ubiquitin-conjugating enzyme UBE2D1 in the form of a thioester and then directly transfers the ubiquitin to targeted substrates. Associates with the proteasome and promotes elongation of ubiquitin chains on substrates bound to the 26S proteasome. Also catalyzes 'Lys-29'- and 'Lys-48'-linked ubiquitination of 26S proteasome subunit ADRM1/RPN13 in response to proteotoxic stress, impairing the ability of the proteasome to bind and degrade ubiquitin-conjugated proteins. Acts as a negative regulator of autophagy by mediating 'Lys-29'- and 'Lys-48'-linked ubiquitination of PIK3C3/VPS34, promoting its degradation. Can assemble unanchored poly-ubiquitin chains in either 'Lys-29'- or 'Lys-48'-linked polyubiquitin chains; with some preference for 'Lys-48' linkages. Acts as a negative regulator of type I interferon by mediating 'Lys-48'-linked ubiquitination of IRF3 and IRF7, leading to their degradation by the proteasome. Catalyzes ubiquitination and degradation of CAND2. This is Ubiquitin-protein ligase E3C from Homo sapiens (Human).